The chain runs to 298 residues: Protoheme IX farnesyltransferase (298 aa).

The next 9 helical transmembrane spans lie at 26-46 (VVGH…PGVP), 52-72 (FWAS…NHFL), 98-118 (VVGF…AFVN), 120-140 (LTAF…TVYL), 148-168 (IVIG…AVTG), 174-194 (ALLL…AYAI), 214-234 (IAFT…AGLM), 241-261 (SGEI…YYAI), and 278-298 (YSLV…YIVL).

The protein belongs to the UbiA prenyltransferase family. Protoheme IX farnesyltransferase subfamily.

The protein localises to the cell inner membrane. The catalysed reaction is heme b + (2E,6E)-farnesyl diphosphate + H2O = Fe(II)-heme o + diphosphate. It participates in porphyrin-containing compound metabolism; heme O biosynthesis; heme O from protoheme: step 1/1. Its function is as follows. Converts heme B (protoheme IX) to heme O by substitution of the vinyl group on carbon 2 of heme B porphyrin ring with a hydroxyethyl farnesyl side group. This Methylococcus capsulatus (strain ATCC 33009 / NCIMB 11132 / Bath) protein is Protoheme IX farnesyltransferase.